We begin with the raw amino-acid sequence, 396 residues long: 1-deoxy-D-xylulose 5-phosphate reductoisomerase (396 aa).

NADPH is bound by residues T15, G16, S17, I18, G41, and N130. K131 serves as a coordination point for 1-deoxy-D-xylulose 5-phosphate. E132 is a binding site for NADPH. D155 contributes to the Mn(2+) binding site. S156, E157, S181, and H204 together coordinate 1-deoxy-D-xylulose 5-phosphate. Position 157 (E157) interacts with Mn(2+). G210 contacts NADPH. Residues S217, N222, K223, and E226 each contribute to the 1-deoxy-D-xylulose 5-phosphate site. Residue E226 participates in Mn(2+) binding.

This sequence belongs to the DXR family. Requires Mg(2+) as cofactor. It depends on Mn(2+) as a cofactor.

The catalysed reaction is 2-C-methyl-D-erythritol 4-phosphate + NADP(+) = 1-deoxy-D-xylulose 5-phosphate + NADPH + H(+). It participates in isoprenoid biosynthesis; isopentenyl diphosphate biosynthesis via DXP pathway; isopentenyl diphosphate from 1-deoxy-D-xylulose 5-phosphate: step 1/6. Functionally, catalyzes the NADPH-dependent rearrangement and reduction of 1-deoxy-D-xylulose-5-phosphate (DXP) to 2-C-methyl-D-erythritol 4-phosphate (MEP). In Bifidobacterium longum (strain NCC 2705), this protein is 1-deoxy-D-xylulose 5-phosphate reductoisomerase.